Consider the following 300-residue polypeptide: UDP-N-acetylenolpyruvoylglucosamine reductase (300 aa).

In terms of domain architecture, FAD-binding PCMH-type spans 30-194 (KVGGPADFFA…LAAVFSLAAG (165 aa)). Arginine 174 is a catalytic residue. Serine 223 functions as the Proton donor in the catalytic mechanism. Residue glutamate 293 is part of the active site.

This sequence belongs to the MurB family. FAD is required as a cofactor.

The protein localises to the cytoplasm. The enzyme catalyses UDP-N-acetyl-alpha-D-muramate + NADP(+) = UDP-N-acetyl-3-O-(1-carboxyvinyl)-alpha-D-glucosamine + NADPH + H(+). It participates in cell wall biogenesis; peptidoglycan biosynthesis. Its function is as follows. Cell wall formation. This is UDP-N-acetylenolpyruvoylglucosamine reductase from Geotalea uraniireducens (strain Rf4) (Geobacter uraniireducens).